A 366-amino-acid polypeptide reads, in one-letter code: D-alanine--D-alanine ligase (366 aa).

Residues 144 to 347 (KRLLKDAGLK…YRELIENLIE (204 aa)) enclose the ATP-grasp domain. Position 174-229 (174-229 (KEELGLPMFIKPANQGSSVGVHKVENEEQFYSAIKDAFQFDHKLLVEEAIVGREIE)) interacts with ATP. Mg(2+) is bound by residues D301, E314, and N316.

Belongs to the D-alanine--D-alanine ligase family. Requires Mg(2+) as cofactor. Mn(2+) serves as cofactor.

The protein localises to the cytoplasm. The catalysed reaction is 2 D-alanine + ATP = D-alanyl-D-alanine + ADP + phosphate + H(+). It functions in the pathway cell wall biogenesis; peptidoglycan biosynthesis. Its function is as follows. Cell wall formation. This is D-alanine--D-alanine ligase from Oceanobacillus iheyensis (strain DSM 14371 / CIP 107618 / JCM 11309 / KCTC 3954 / HTE831).